Reading from the N-terminus, the 488-residue chain is Probable malate:quinone oxidoreductase (488 aa).

Belongs to the MQO family. FAD is required as a cofactor.

It catalyses the reaction (S)-malate + a quinone = a quinol + oxaloacetate. The protein operates within carbohydrate metabolism; tricarboxylic acid cycle; oxaloacetate from (S)-malate (quinone route): step 1/1. The protein is Probable malate:quinone oxidoreductase of Neisseria meningitidis serogroup A / serotype 4A (strain DSM 15465 / Z2491).